Consider the following 405-residue polypeptide: S-adenosylmethionine synthase (405 aa).

141–146 (GQGSVD) contributes to the ATP binding site.

The protein belongs to the AdoMet synthase 2 family. It depends on Mg(2+) as a cofactor.

It carries out the reaction L-methionine + ATP + H2O = S-adenosyl-L-methionine + phosphate + diphosphate. It functions in the pathway amino-acid biosynthesis; S-adenosyl-L-methionine biosynthesis; S-adenosyl-L-methionine from L-methionine: step 1/1. Catalyzes the formation of S-adenosylmethionine from methionine and ATP. This chain is S-adenosylmethionine synthase, found in Methanococcus maripaludis (strain C6 / ATCC BAA-1332).